Reading from the N-terminus, the 296-residue chain is Acetylglutamate kinase (296 aa).

Substrate-binding positions include Gly-68–Gly-69, Arg-90, and Asn-193.

Belongs to the acetylglutamate kinase family. ArgB subfamily.

It is found in the cytoplasm. The catalysed reaction is N-acetyl-L-glutamate + ATP = N-acetyl-L-glutamyl 5-phosphate + ADP. The protein operates within amino-acid biosynthesis; L-arginine biosynthesis; N(2)-acetyl-L-ornithine from L-glutamate: step 2/4. In terms of biological role, catalyzes the ATP-dependent phosphorylation of N-acetyl-L-glutamate. The protein is Acetylglutamate kinase of Acidothermus cellulolyticus (strain ATCC 43068 / DSM 8971 / 11B).